The following is a 91-amino-acid chain: Small ribosomal subunit protein uS19 (91 aa).

It belongs to the universal ribosomal protein uS19 family.

Its function is as follows. Protein S19 forms a complex with S13 that binds strongly to the 16S ribosomal RNA. The protein is Small ribosomal subunit protein uS19 of Exiguobacterium sp. (strain ATCC BAA-1283 / AT1b).